Here is a 726-residue protein sequence, read N- to C-terminus: Putative RNA polymerase II subunit B1 CTD phosphatase RPAP2 homolog (726 aa).

An RTR1-type zinc finger spans residues Ala43–Ser131. Zn(2+)-binding residues include Cys66, Cys71, Cys107, and Cys111. The span at Val209–Gln218 shows a compositional bias: basic and acidic residues. Disordered stretches follow at residues Val209–Ser242 and Lys294–Gly323. Residues Asp220–Glu241 are compositionally biased toward polar residues.

The protein belongs to the RPAP2 family.

It is found in the nucleus. It catalyses the reaction O-phospho-L-seryl-[protein] + H2O = L-seryl-[protein] + phosphate. The enzyme catalyses O-phospho-L-threonyl-[protein] + H2O = L-threonyl-[protein] + phosphate. In terms of biological role, putative RNA polymerase II subunit B1 C-terminal domain (CTD) phosphatase involved in RNA polymerase II transcription regulation. The polypeptide is Putative RNA polymerase II subunit B1 CTD phosphatase RPAP2 homolog (Oryza sativa subsp. japonica (Rice)).